A 141-amino-acid polypeptide reads, in one-letter code: Sec-independent protein translocase protein TatB (141 aa).

The helical transmembrane segment at 1-21 (MFGISFSELLLVGLVALLVLG) threads the bilayer. Residues 74–141 (EAQKLLAPLT…SPPSETPRNP (68 aa)) are disordered. The segment covering 89-115 (QETPPPAAESPAPSVPTPPPTSTPAVP) has biased composition (pro residues). The span at 116–129 (PADAAAPPAVAAST) shows a compositional bias: low complexity. A compositionally biased stretch (pro residues) spans 130–141 (PPSPPSETPRNP).

This sequence belongs to the TatB family. The Tat system comprises two distinct complexes: a TatABC complex, containing multiple copies of TatA, TatB and TatC subunits, and a separate TatA complex, containing only TatA subunits. Substrates initially bind to the TatABC complex, which probably triggers association of the separate TatA complex to form the active translocon.

It localises to the cell inner membrane. Its function is as follows. Part of the twin-arginine translocation (Tat) system that transports large folded proteins containing a characteristic twin-arginine motif in their signal peptide across membranes. Together with TatC, TatB is part of a receptor directly interacting with Tat signal peptides. TatB may form an oligomeric binding site that transiently accommodates folded Tat precursor proteins before their translocation. The chain is Sec-independent protein translocase protein TatB from Pseudomonas aeruginosa (strain ATCC 15692 / DSM 22644 / CIP 104116 / JCM 14847 / LMG 12228 / 1C / PRS 101 / PAO1).